The primary structure comprises 169 residues: Centrin-1 (169 aa).

Residues Met-1–Glu-21 form an essential for homooligomerization region. A disordered region spans residues Met-1–Glu-25. EF-hand domains lie at Glu-25 to Glu-60, Pro-61 to Glu-96, Asp-98 to Asn-133, and Leu-134 to Phe-169. Residues Asp-38, Asp-40, Ser-42, Cys-44, Glu-49, Asp-74, Asp-76, Thr-78, Ser-80, and Glu-85 each contribute to the Ca(2+) site.

This sequence belongs to the centrin family. In terms of assembly, monomer. Homooligomerizes in a Ca(2+)-dependent manner. Interaction via the C-terminus with other proteins disrupts and/or prevents homooligomerization. Interacts with SFI1.

It is found in the cytoplasm. The protein resides in the cytoskeleton. It localises to the microtubule organizing center. The protein localises to the centrosome. Acts as a calcium sensor. Part of the centrosome outer core complex. In Toxoplasma gondii (strain ATCC 50611 / Me49), this protein is Centrin-1.